Reading from the N-terminus, the 289-residue chain is MEEPSGAQLLGPVEIRALAEKLDVTPTKKLGQNFVHDPNTVRRIVTAADLTPEDHVVEVGPGLGSLTLALVEKAASVTAVEIDPRLAAELPATFAWRAPGLADKLTVVQKDALKVQQSDFTTQPTALVANLPYNVSVPVLLHMLAEFPSITKVLVMVQLEVADRLAAVPGSKIYGVPSVKASFYGEVSKAGTIGKHVFWPAPQIESGLVKIIRTHTPWPQDDATRAKVWPVIDAAFLQRRKTLRAALSGHFGSASAAEEALRAADIDPQLRGERLDVADYVRLAGVIGS.

The S-adenosyl-L-methionine site is built by Asn-33, Val-35, Gly-60, Glu-81, Asp-111, and Asn-130.

This sequence belongs to the class I-like SAM-binding methyltransferase superfamily. rRNA adenine N(6)-methyltransferase family. RsmA subfamily.

It localises to the cytoplasm. The enzyme catalyses adenosine(1518)/adenosine(1519) in 16S rRNA + 4 S-adenosyl-L-methionine = N(6)-dimethyladenosine(1518)/N(6)-dimethyladenosine(1519) in 16S rRNA + 4 S-adenosyl-L-homocysteine + 4 H(+). In terms of biological role, specifically dimethylates two adjacent adenosines (A1518 and A1519) in the loop of a conserved hairpin near the 3'-end of 16S rRNA in the 30S particle. May play a critical role in biogenesis of 30S subunits. This Corynebacterium efficiens (strain DSM 44549 / YS-314 / AJ 12310 / JCM 11189 / NBRC 100395) protein is Ribosomal RNA small subunit methyltransferase A.